The primary structure comprises 656 residues: Nuclear elongation and deformation protein 1 (656 aa).

A phosphoserine mark is found at Ser-99 and Ser-103. Positions 99 to 118 are enriched in polar residues; sequence SPIVSPTTSPKQTPSINVTE. Residues 99–121 form a disordered region; it reads SPIVSPTTSPKQTPSINVTEPQD. Residue Thr-106 is modified to Phosphothreonine. Phosphoserine occurs at positions 107, 159, and 286. Disordered stretches follow at residues 282–328 and 587–656; these read VYGH…VSES and SDEE…ENAV. Residues 291–300 are compositionally biased toward low complexity; that stretch reads PSRTPASPKS. Ser-318, Ser-321, and Ser-587 each carry phosphoserine. A compositionally biased stretch (polar residues) spans 318-328; the sequence is SEQSLSPVSES. A compositionally biased stretch (low complexity) spans 596–609; it reads KSTSKSPKTPKNTK. Over residues 640–656 the composition is skewed to acidic residues; the sequence is FEGEEDEEGEEDVENAV.

Belongs to the lipin family. As to quaternary structure, interacts with dis3, pim1 and nup189.

May have a role in the maintenance of the nuclear envelope structure and in minichromosome stability. The sequence is that of Nuclear elongation and deformation protein 1 (ned1) from Schizosaccharomyces pombe (strain 972 / ATCC 24843) (Fission yeast).